Consider the following 684-residue polypeptide: Sec1 family domain-containing protein 2 (684 aa).

The protein belongs to the STXBP/unc-18/SEC1 family.

May be involved in protein transport. This chain is Sec1 family domain-containing protein 2 (Scfd2), found in Mus musculus (Mouse).